Reading from the N-terminus, the 513-residue chain is Histidine ammonia-lyase (513 aa).

A cross-link (5-imidazolinone (Ala-Gly)) is located at residues 144 to 146 (ASG). 2,3-didehydroalanine (Ser) is present on serine 145.

Belongs to the PAL/histidase family. In terms of processing, contains an active site 4-methylidene-imidazol-5-one (MIO), which is formed autocatalytically by cyclization and dehydration of residues Ala-Ser-Gly.

The protein resides in the cytoplasm. The catalysed reaction is L-histidine = trans-urocanate + NH4(+). It participates in amino-acid degradation; L-histidine degradation into L-glutamate; N-formimidoyl-L-glutamate from L-histidine: step 1/3. The chain is Histidine ammonia-lyase from Streptococcus sanguinis (strain SK36).